The sequence spans 1706 residues: Bifunctional hemolysin/adenylate cyclase (1706 aa).

The interval 1 to 399 (MQQSHQAGYA…RRPSLGAVER (399 aa)) is a, catalytic. 349–356 (AYGVAGKS) contributes to the ATP binding site. The interval 367–405 (GVPGGRSKSSPDVLETVPASPGLRRPSLGAVERQDSGYD) is disordered. The tract at residues 400–912 (QDSGYDSLDG…LKHSIKLEVI (513 aa)) is b, Ala/Gly-rich. Residues 500 to 698 (LSAAVFGLGE…SVVGAPVAVV (199 aa)) form a required for interaction with CyaC region. 2 N6-palmitoyl lysine lipidation sites follow: lysine 860 and lysine 983. Residues 913 to 1656 (GGDGDDVVLA…RDADHRVEAI (744 aa)) are c. Hemolysin-type calcium-binding repeat units follow at residues 1014-1031 (IGGA…DNFL), 1032-1049 (AGGA…NDTL), 1050-1067 (VGGE…DDVF), 1155-1172 (WGDD…DDIL), 1173-1190 (RGGL…NDIF), 1279-1296 (MGQG…DDLL), 1297-1314 (FGGD…NDTL), 1315-1332 (YGGL…NDWF), 1335-1352 (TPAR…VDTV), 1411-1428 (TGDA…ADVL), 1429-1446 (AGGE…DDQL), 1447-1464 (SGDA…DDWF), 1468-1484 (AANA…NDTV), 1537-1554 (IGDA…NDVL), 1555-1572 (SGGA…SDLL), 1573-1590 (SGDA…DDTY), and 1603-1620 (ESGG…ADQL). A d, Asp/Gly-rich region spans residues 1657–1706 (HAANQAIDPAGIEKLVEAMAQYPDPGAAAAAPPAARVPDTLMQSLAVNWR).

In the N-terminal section; belongs to the adenylyl cyclase class-2 family. The protein in the C-terminal section; belongs to the RTX prokaryotic toxin family. Post-translationally, released in a processed form. In terms of processing, palmitoylated at Lys-860 and Lys-983 by CyaC. The toxin only becomes active when modified in position Lys-983: palmitoylation is required for efficient membrane insertion and pore formation of the acylated Hemolysin chain.

The protein resides in the secreted. It is found in the host cell membrane. The catalysed reaction is ATP = 3',5'-cyclic AMP + diphosphate. Activated by host calmodulin. In terms of biological role, bifunctional adenylate cyclase toxin-hemolysin that plays a crucial role in host colonization. It causes whooping cough by acting on mammalian cells by elevating cAMP-concentration and thus disrupts normal cell function. Its function is as follows. Adenylate cyclase that is activated by host intracellular calmodulin and catalyzes un-regulated conversion of ATP to cAMP, thereby impairing microbicidal functions of immune effector cells and inducing apoptosis of lung macrophages. Hemolysin that forms small cation-selective membrane channels, leading to hemolytic activity. The hemolytic activity of CyaA is weak compared with that of the HlyA of E.coli. In Bordetella bronchiseptica (strain ATCC BAA-588 / NCTC 13252 / RB50) (Alcaligenes bronchisepticus), this protein is Bifunctional hemolysin/adenylate cyclase (cya).